The following is a 354-amino-acid chain: Rhodopsin (354 aa).

Residues 1–36 (MNGTEGPNFYVPMSNKTGVVRSPFDYPQYYLAEPWQ) are Extracellular-facing. Asn-2 and Asn-15 each carry an N-linked (GlcNAc...) asparagine glycan. The chain crosses the membrane as a helical span at residues 37 to 61 (YSALAAYMFLLILLGLPINFMTLFV). The Cytoplasmic portion of the chain corresponds to 62-73 (TIQHKKLRTPLN). Residues 74–96 (YILLNLVFANHFMVLCGFTVTMY) form a helical membrane-spanning segment. Residues 97–110 (TSMHGYFIFGPTGC) are Extracellular-facing. Cys-110 and Cys-187 are joined by a disulfide. The helical transmembrane segment at 111-133 (YIEGFFATLGGEVALWSLVVLAV) threads the bilayer. The short motif at 134–136 (ERY) is the 'Ionic lock' involved in activated form stabilization element. At 134 to 152 (ERYIVVCKPMANFRFGENH) the chain is on the cytoplasmic side. A helical transmembrane segment spans residues 153-173 (AIMGVAFTWIMALSCAAPPLF). Over 174-202 (GWSRYIPEGMQCSCGVDYYTLKPEVNNES) the chain is Extracellular. A helical membrane pass occupies residues 203 to 224 (FVIYMFIVHFTIPLIVIFFCYG). Topologically, residues 225-252 (RLLCTVKEAAAQQQESLTTQKAEKEVTR) are cytoplasmic. Residues 253–274 (MVVIMVVFFLICWVPYAYVAFY) form a helical membrane-spanning segment. Residues 275–286 (IFTHQGSNFGPV) are Extracellular-facing. A helical transmembrane segment spans residues 287–308 (FMTVPAFFAKSSAIYNPVIYIV). Lys-296 carries the N6-(retinylidene)lysine modification. At 309–354 (LNKQFRNCLITTLCCGKNPFGDEDGSSAATSKTEASSVSSSQVSPA) the chain is on the cytoplasmic side. 2 S-palmitoyl cysteine lipidation sites follow: Cys-322 and Cys-323. A disordered region spans residues 331-354 (EDGSSAATSKTEASSVSSSQVSPA). Residues 334-354 (SSAATSKTEASSVSSSQVSPA) show a composition bias toward low complexity.

The protein belongs to the G-protein coupled receptor 1 family. Opsin subfamily. Contains one covalently linked retinal chromophore. Upon light absorption, the covalently bound 11-cis-retinal is converted to all-trans-retinal. After hydrolysis of the Schiff base and release of the covalently bound all-trans-retinal, active rhodopsin is regenerated by binding of a fresh molecule of 11-cis-retinal.

The protein localises to the membrane. Its subcellular location is the cell projection. The protein resides in the cilium. It localises to the photoreceptor outer segment. Photoreceptor required for image-forming vision at low light intensity. Required for photoreceptor cell viability after birth. Light-induced isomerization of 11-cis to all-trans retinal triggers a conformational change that activates signaling via G-proteins. Subsequent receptor phosphorylation mediates displacement of the bound G-protein alpha subunit by arrestin and terminates signaling. This is Rhodopsin (rho) from Xenopus laevis (African clawed frog).